We begin with the raw amino-acid sequence, 147 residues long: Hemoglobin subunit beta (147 aa).

One can recognise a Globin domain in the interval 3–147 (HWTAEEKQLI…VAHALARKYH (145 aa)). Heme b is bound by residues His64 and His93.

This sequence belongs to the globin family. Heterotetramer of two alpha chains and two beta chains. As to expression, red blood cells.

In terms of biological role, involved in oxygen transport from the lung to the various peripheral tissues. This Anas platyrhynchos (Mallard) protein is Hemoglobin subunit beta (HBB).